Consider the following 757-residue polypeptide: Polyribonucleotide nucleotidyltransferase (757 aa).

Mg(2+) is bound by residues Asp532 and Asp538. In terms of domain architecture, KH spans 598–657; the sequence is PRVTAIKVPVDKIGEVIGPKGKMINSITEQTGANISIEDDGTVFVGATDGPSAQAAIDMI. An S1 motif domain is found at 669-738; that stretch reads GERFLGTVVK…NRGKISLIPV (70 aa).

This sequence belongs to the polyribonucleotide nucleotidyltransferase family. Mg(2+) serves as cofactor.

Its subcellular location is the cytoplasm. The enzyme catalyses RNA(n+1) + phosphate = RNA(n) + a ribonucleoside 5'-diphosphate. Its function is as follows. Involved in mRNA degradation. Catalyzes the phosphorolysis of single-stranded polyribonucleotides processively in the 3'- to 5'-direction. This is Polyribonucleotide nucleotidyltransferase from Rhodococcus jostii (strain RHA1).